A 1270-amino-acid chain; its full sequence is ATP-dependent helicase/nuclease subunit A (1270 aa).

The 474-residue stretch at 3–476 (TKWTEEQELA…IMLYKNFRSR (474 aa)) folds into the UvrD-like helicase ATP-binding domain. ATP is bound at residue 24-31 (AAAGSGKT). Residues 528–823 (IENLKVAGDI…RIMSIHKSKG (296 aa)) enclose the UvrD-like helicase C-terminal domain.

Belongs to the helicase family. AddA subfamily. In terms of assembly, heterodimer of AddA and AddB/RexB. The cofactor is Mg(2+).

The enzyme catalyses Couples ATP hydrolysis with the unwinding of duplex DNA by translocating in the 3'-5' direction.. The catalysed reaction is ATP + H2O = ADP + phosphate + H(+). Functionally, the heterodimer acts as both an ATP-dependent DNA helicase and an ATP-dependent, dual-direction single-stranded exonuclease. Recognizes the chi site generating a DNA molecule suitable for the initiation of homologous recombination. The AddA nuclease domain is required for chi fragment generation; this subunit has the helicase and 3' -&gt; 5' nuclease activities. This is ATP-dependent helicase/nuclease subunit A from Clostridium perfringens (strain SM101 / Type A).